The following is a 371-amino-acid chain: MDFQLQATDNNARAGLLNLAHSQVATPVFMPVGTQGCIKSLDATDAQEILGAKLILANTYHMYLRPGEKVVEELGGLHRFAQFYGSFLTDSGGFQAFSLSDNVKLQEDGIVFKSHIDGSKHLFTPAKVLDIQYSLNSDIMMVLDDLVGLPAPLKRLEESIKRSAKWANMSLEYHKEKNRPSNNLFAIIQGGTHLKMRSLSVGLTHEGFDGYAIGGLAVGESADEMLETIAHTAPLLPKDKPRYLMGVGTPENILDAISLGVDMFDCVMPTRNARNATLFTHSGKISIKNAPYKLDNTPIEENCACYACKRYSKAYLHHLFRAKELTYARLASLHNLHFYLELVKNARNAILEKRFLSFKKEFLEKYNSRSH.

Catalysis depends on D90, which acts as the Nucleophile. The active-site Proton acceptor is the D90. Residues D90–F94, S91, D144, Q189, and G215 each bind substrate. The segment at G246–N252 is RNA binding. The Nucleophile role is filled by D265. Positions T270–R274 are RNA binding; important for wobble base 34 recognition. Positions 303, 305, 308, and 334 each coordinate Zn(2+).

This sequence belongs to the queuine tRNA-ribosyltransferase family. As to quaternary structure, homodimer. Within each dimer, one monomer is responsible for RNA recognition and catalysis, while the other monomer binds to the replacement base PreQ1. It depends on Zn(2+) as a cofactor.

It carries out the reaction 7-aminomethyl-7-carbaguanine + guanosine(34) in tRNA = 7-aminomethyl-7-carbaguanosine(34) in tRNA + guanine. It participates in tRNA modification; tRNA-queuosine biosynthesis. Its function is as follows. Catalyzes the base-exchange of a guanine (G) residue with the queuine precursor 7-aminomethyl-7-deazaguanine (PreQ1) at position 34 (anticodon wobble position) in tRNAs with GU(N) anticodons (tRNA-Asp, -Asn, -His and -Tyr). Catalysis occurs through a double-displacement mechanism. The nucleophile active site attacks the C1' of nucleotide 34 to detach the guanine base from the RNA, forming a covalent enzyme-RNA intermediate. The proton acceptor active site deprotonates the incoming PreQ1, allowing a nucleophilic attack on the C1' of the ribose to form the product. After dissociation, two additional enzymatic reactions on the tRNA convert PreQ1 to queuine (Q), resulting in the hypermodified nucleoside queuosine (7-(((4,5-cis-dihydroxy-2-cyclopenten-1-yl)amino)methyl)-7-deazaguanosine). The chain is Queuine tRNA-ribosyltransferase from Helicobacter pylori (strain ATCC 700392 / 26695) (Campylobacter pylori).